A 468-amino-acid chain; its full sequence is Probable protein phosphatase 2C 52 (468 aa).

The PPM-type phosphatase domain occupies 67–372 (SSCIFTQQGR…DDCAVVCLFL (306 aa)). Mn(2+) is bound by residues aspartate 102, glycine 103, aspartate 317, and aspartate 363. Over residues 413–429 (RSSSDQENETYGNVNTE) the composition is skewed to polar residues. Positions 413–442 (RSSSDQENETYGNVNTETDAEDEKTVGDQN) are disordered.

Belongs to the PP2C family. It depends on Mg(2+) as a cofactor. The cofactor is Mn(2+).

The catalysed reaction is O-phospho-L-seryl-[protein] + H2O = L-seryl-[protein] + phosphate. It carries out the reaction O-phospho-L-threonyl-[protein] + H2O = L-threonyl-[protein] + phosphate. The protein is Probable protein phosphatase 2C 52 of Arabidopsis thaliana (Mouse-ear cress).